The primary structure comprises 997 residues: Protein translocase subunit SecA (997 aa).

ATP contacts are provided by residues Gln-84, 102-106 (GEGKT), and Asp-582. A disordered region spans residues 950–997 (PYVPVPEAKPEPSEVFGVERKRATPPPQPGLSRAERRRLMRQEKKRKK). Residues 957–971 (AKPEPSEVFGVERKR) are compositionally biased toward basic and acidic residues. A compositionally biased stretch (basic residues) spans 984-997 (ERRRLMRQEKKRKK).

It belongs to the SecA family. Monomer and homodimer. Part of the essential Sec protein translocation apparatus which comprises SecA, SecYEG and auxiliary proteins SecDF. Other proteins may also be involved.

The protein resides in the cell inner membrane. It localises to the cytoplasm. It catalyses the reaction ATP + H2O + cellular proteinSide 1 = ADP + phosphate + cellular proteinSide 2.. Part of the Sec protein translocase complex. Interacts with the SecYEG preprotein conducting channel. Has a central role in coupling the hydrolysis of ATP to the transfer of proteins into and across the cell membrane, serving as an ATP-driven molecular motor driving the stepwise translocation of polypeptide chains across the membrane. The chain is Protein translocase subunit SecA from Thermus thermophilus (strain ATCC BAA-163 / DSM 7039 / HB27).